Here is a 287-residue protein sequence, read N- to C-terminus: ATP synthase gamma chain (287 aa).

Belongs to the ATPase gamma chain family. F-type ATPases have 2 components, CF(1) - the catalytic core - and CF(0) - the membrane proton channel. CF(1) has five subunits: alpha(3), beta(3), gamma(1), delta(1), epsilon(1). CF(0) has three main subunits: a, b and c.

The protein localises to the cell inner membrane. Produces ATP from ADP in the presence of a proton gradient across the membrane. The gamma chain is believed to be important in regulating ATPase activity and the flow of protons through the CF(0) complex. This chain is ATP synthase gamma chain, found in Azotobacter vinelandii (strain DJ / ATCC BAA-1303).